The primary structure comprises 373 residues: Opsin Rh1 (373 aa).

At 1–49 (MESFAVAAAQLGPHFAPLSNGSVVDKVTPDMAHLISPYWNQFPAMDPIW) the chain is on the extracellular side. Residue asparagine 20 is glycosylated (N-linked (GlcNAc...) asparagine). The helical transmembrane segment at 50–74 (AKILTAYMIMIGMISWCGNGVVIYI) threads the bilayer. The Cytoplasmic portion of the chain corresponds to 75–86 (FATTKSLRTPAN). The chain crosses the membrane as a helical span at residues 87-112 (LLVINLAISDFGIMITNTPMMGINLY). Topologically, residues 113–126 (FETWVLGPMMCDIY) are extracellular. Residues cysteine 123 and cysteine 200 are joined by a disulfide bond. Residues 127–146 (AGLGSAFGCSSIWSMCMISL) traverse the membrane as a helical segment. The Cytoplasmic segment spans residues 147 to 165 (DRYQVIVKGMAGRPMTIPL). A helical membrane pass occupies residues 166–189 (ALGKIAYIWFMSSIWCLAPAFGWS). Residues 190–213 (RYVPEGNLTSCGIDYLERDWNPRS) are Extracellular-facing. Asparagine 196 is a glycosylation site (N-linked (GlcNAc...) asparagine). Residues 214–241 (YLIFYSIFVYYIPLFLICYSYWFIIAAV) form a helical membrane-spanning segment. Over 242-276 (SAHEKAMREQAKKMNVKSLRSSEDAEKSAEGKLAK) the chain is Cytoplasmic. Residues 277–300 (VALVTITLWFMAWTPYLVINCMGL) traverse the membrane as a helical segment. Topologically, residues 301-307 (FKFEGLT) are extracellular. The helical transmembrane segment at 308 to 332 (PLNTIWGACFAKSAACYNPIVYGIS) threads the bilayer. Lysine 319 carries the N6-(retinylidene)lysine modification. Residues 333-373 (HPKYRLALKEKCPCCVFGKVDDGKSSDAQSQATASEAESKA) are Cytoplasmic-facing. A disordered region spans residues 354–373 (DGKSSDAQSQATASEAESKA). Over residues 358 to 373 (SDAQSQATASEAESKA) the composition is skewed to low complexity.

It belongs to the G-protein coupled receptor 1 family. Opsin subfamily. In terms of processing, phosphorylated on some or all of the serine and threonine residues present in the C-terminal region.

The protein localises to the cell projection. It localises to the rhabdomere membrane. Visual pigments are the light-absorbing molecules that mediate vision. They consist of an apoprotein, opsin, covalently linked to cis-retinal. The polypeptide is Opsin Rh1 (ninaE) (Drosophila melanogaster (Fruit fly)).